We begin with the raw amino-acid sequence, 331 residues long: Ornithine carbamoyltransferase (331 aa).

Carbamoyl phosphate contacts are provided by residues 55 to 58 (STRT), Gln-82, Arg-106, and 133 to 136 (HPTQ). Residues Asn-166, Asp-230, and 234-235 (SM) contribute to the L-ornithine site. Carbamoyl phosphate contacts are provided by residues 272–273 (CL) and Arg-317.

This sequence belongs to the aspartate/ornithine carbamoyltransferase superfamily. OTCase family.

The protein localises to the cytoplasm. It carries out the reaction carbamoyl phosphate + L-ornithine = L-citrulline + phosphate + H(+). It participates in amino-acid biosynthesis; L-arginine biosynthesis; L-arginine from L-ornithine and carbamoyl phosphate: step 1/3. Functionally, reversibly catalyzes the transfer of the carbamoyl group from carbamoyl phosphate (CP) to the N(epsilon) atom of ornithine (ORN) to produce L-citrulline. The chain is Ornithine carbamoyltransferase (argF) from Neisseria gonorrhoeae.